A 107-amino-acid polypeptide reads, in one-letter code: UPF0145 protein YbjQ (107 aa).

It belongs to the UPF0145 family.

This chain is UPF0145 protein YbjQ, found in Salmonella dublin (strain CT_02021853).